The primary structure comprises 301 residues: Recombination-associated protein RdgC (301 aa).

The protein belongs to the RdgC family.

It localises to the cytoplasm. The protein resides in the nucleoid. May be involved in recombination. In Stenotrophomonas maltophilia (strain R551-3), this protein is Recombination-associated protein RdgC.